Consider the following 179-residue polypeptide: Early E3 20.1 kDa glycoprotein (179 aa).

N-linked (GlcNAc...) asparagine; by host glycosylation is found at N29, N57, N70, N75, and N123.

This sequence belongs to the adenoviridae E3_20 family.

In terms of biological role, E3 proteins seem to be dispensable for virus growth in tissue culture cells. They are potentially important for virus growth under special conditions; E3 region may help adenoviruses to evade the immune surveillance of the host. The polypeptide is Early E3 20.1 kDa glycoprotein (Homo sapiens (Human)).